The sequence spans 128 residues: Large ribosomal subunit protein bL17 (128 aa).

It belongs to the bacterial ribosomal protein bL17 family. In terms of assembly, part of the 50S ribosomal subunit. Contacts protein L32.

This Pseudomonas fluorescens (strain ATCC BAA-477 / NRRL B-23932 / Pf-5) protein is Large ribosomal subunit protein bL17.